The chain runs to 224 residues: Phosphoribosylformylglycinamidine synthase subunit PurQ (224 aa).

Residues 2–224 (TVAVVRFGGS…DGQGILGAFA (223 aa)) enclose the Glutamine amidotransferase type-1 domain. The active-site Nucleophile is the Cys-85. Active-site residues include His-202 and Glu-204.

As to quaternary structure, part of the FGAM synthase complex composed of 1 PurL, 1 PurQ and 2 PurS subunits.

Its subcellular location is the cytoplasm. It carries out the reaction N(2)-formyl-N(1)-(5-phospho-beta-D-ribosyl)glycinamide + L-glutamine + ATP + H2O = 2-formamido-N(1)-(5-O-phospho-beta-D-ribosyl)acetamidine + L-glutamate + ADP + phosphate + H(+). It catalyses the reaction L-glutamine + H2O = L-glutamate + NH4(+). It functions in the pathway purine metabolism; IMP biosynthesis via de novo pathway; 5-amino-1-(5-phospho-D-ribosyl)imidazole from N(2)-formyl-N(1)-(5-phospho-D-ribosyl)glycinamide: step 1/2. In terms of biological role, part of the phosphoribosylformylglycinamidine synthase complex involved in the purines biosynthetic pathway. Catalyzes the ATP-dependent conversion of formylglycinamide ribonucleotide (FGAR) and glutamine to yield formylglycinamidine ribonucleotide (FGAM) and glutamate. The FGAM synthase complex is composed of three subunits. PurQ produces an ammonia molecule by converting glutamine to glutamate. PurL transfers the ammonia molecule to FGAR to form FGAM in an ATP-dependent manner. PurS interacts with PurQ and PurL and is thought to assist in the transfer of the ammonia molecule from PurQ to PurL. This Halobacterium salinarum (strain ATCC 700922 / JCM 11081 / NRC-1) (Halobacterium halobium) protein is Phosphoribosylformylglycinamidine synthase subunit PurQ.